The chain runs to 226 residues: MKELFLFSDMIMHSHTFNYLFHLILVAIIVLIVAKLATRSMQLVPRGSQNLLEAYLEGIVSMGRDVMGSDELARKYLPLVATIGLIVLTSNVIGIIPGFEAPSSSLNLTLCLALSVFLYYNFEGIRTQGIIKYFAHFMGPNKILAPLMFPIEIVSHLSRIVSLSFRLFGNIKGDDLFLMVVLSLAPWVAPLPAFALLTFMALLQTFIFMILTYVYLAGAVVVSEEH.

5 helical membrane-spanning segments follow: residues 17 to 37 (FNYLFHLILVAIIVLIVAKLA), 79 to 99 (LVATIGLIVLTSNVIGIIPGF), 105 to 125 (SLNLTLCLALSVFLYYNFEGI), 168 to 188 (FGNIKGDDLFLMVVLSLAPWV), and 200 to 222 (MALLQTFIFMILTYVYLAGAVVV).

This sequence belongs to the ATPase A chain family. F-type ATPases have 2 components, CF(1) - the catalytic core - and CF(0) - the membrane proton channel. CF(1) has five subunits: alpha(3), beta(3), gamma(1), delta(1), epsilon(1). CF(0) has three main subunits: a(1), b(2) and c(9-12). The alpha and beta chains form an alternating ring which encloses part of the gamma chain. CF(1) is attached to CF(0) by a central stalk formed by the gamma and epsilon chains, while a peripheral stalk is formed by the delta and b chains.

The protein resides in the cell inner membrane. Functionally, key component of the proton channel; it plays a direct role in the translocation of protons across the membrane. The polypeptide is ATP synthase subunit a (Campylobacter fetus subsp. fetus (strain 82-40)).